The sequence spans 353 residues: Phospho-N-acetylmuramoyl-pentapeptide-transferase (353 aa).

The next 10 membrane-spanning stretches (helical) occupy residues 24–44 (LGFF…ILWA), 66–86 (TPTM…VLCA), 88–108 (LGNL…FVGF), 129–149 (FGML…KGLD), 160–180 (PLFE…FLST), 192–212 (GLAS…VYVA), 229–249 (VGEL…FLWY), 256–276 (VFMG…NAIV), 281–301 (ILLV…ILQV), and 330–350 (KVIV…LLSL).

This sequence belongs to the glycosyltransferase 4 family. MraY subfamily. Mg(2+) is required as a cofactor.

The protein resides in the cell inner membrane. It carries out the reaction UDP-N-acetyl-alpha-D-muramoyl-L-alanyl-gamma-D-glutamyl-meso-2,6-diaminopimeloyl-D-alanyl-D-alanine + di-trans,octa-cis-undecaprenyl phosphate = di-trans,octa-cis-undecaprenyl diphospho-N-acetyl-alpha-D-muramoyl-L-alanyl-D-glutamyl-meso-2,6-diaminopimeloyl-D-alanyl-D-alanine + UMP. It participates in cell wall biogenesis; peptidoglycan biosynthesis. Functionally, catalyzes the initial step of the lipid cycle reactions in the biosynthesis of the cell wall peptidoglycan: transfers peptidoglycan precursor phospho-MurNAc-pentapeptide from UDP-MurNAc-pentapeptide onto the lipid carrier undecaprenyl phosphate, yielding undecaprenyl-pyrophosphoryl-MurNAc-pentapeptide, known as lipid I. This Helicobacter pylori (strain Shi470) protein is Phospho-N-acetylmuramoyl-pentapeptide-transferase.